The following is a 406-amino-acid chain: Dual-specificity RNA methyltransferase RlmN (406 aa).

The active-site Proton acceptor is E119. The region spanning 125–370 is the Radical SAM core domain; that stretch reads DKGRGTLCVS…AMVRRTRGDD (246 aa). C132 and C375 are joined by a disulfide. 3 residues coordinate [4Fe-4S] cluster: C139, C143, and C146. Residues 192-193, S224, 246-248, and N332 contribute to the S-adenosyl-L-methionine site; these read GE and SLH. C375 acts as the S-methylcysteine intermediate in catalysis.

Belongs to the radical SAM superfamily. RlmN family. The cofactor is [4Fe-4S] cluster.

It is found in the cytoplasm. The catalysed reaction is adenosine(2503) in 23S rRNA + 2 reduced [2Fe-2S]-[ferredoxin] + 2 S-adenosyl-L-methionine = 2-methyladenosine(2503) in 23S rRNA + 5'-deoxyadenosine + L-methionine + 2 oxidized [2Fe-2S]-[ferredoxin] + S-adenosyl-L-homocysteine. The enzyme catalyses adenosine(37) in tRNA + 2 reduced [2Fe-2S]-[ferredoxin] + 2 S-adenosyl-L-methionine = 2-methyladenosine(37) in tRNA + 5'-deoxyadenosine + L-methionine + 2 oxidized [2Fe-2S]-[ferredoxin] + S-adenosyl-L-homocysteine. Functionally, specifically methylates position 2 of adenine 2503 in 23S rRNA and position 2 of adenine 37 in tRNAs. m2A2503 modification seems to play a crucial role in the proofreading step occurring at the peptidyl transferase center and thus would serve to optimize ribosomal fidelity. The polypeptide is Dual-specificity RNA methyltransferase RlmN (Xylella fastidiosa (strain 9a5c)).